The following is a 228-amino-acid chain: DOPA 4,5-dioxygenase (228 aa).

As to quaternary structure, homodimer. Expressed at high level in coloured cap tissue and at least 10 times lower level in the stipe.

Its subcellular location is the cytoplasm. It functions in the pathway pigment biosynthesis; betalain biosynthesis. Extradiol dioxygenase that opens up the cyclic ring of DOPA between carbons 4 and 5 thus producing an unstable seco-DOPA that rearranges non-enzymatically to betalamic acid. Can also catalyze the formation of muscaflavin (a pigment found in the hygrocybe mushrooms family and of some amanita species only) by a 2,3-extradiol cleavage of DOPA. The protein is DOPA 4,5-dioxygenase (DODA) of Amanita muscaria (Fly agaric).